A 361-amino-acid polypeptide reads, in one-letter code: DNA-(apurinic or apyrimidinic site) endonuclease (361 aa).

Positions Met1 to Ile90 are disordered. Acidic residues predominate over residues Thr25 to Glu39. A Nuclear localization signal motif is present at residues Lys41–Lys44. The segment covering Arg43–Lys64 has biased composition (basic residues). Residues Glu68 to Glu80 show a composition bias toward acidic residues. A Mg(2+)-binding site is contributed by Glu139. Tyr211 is an active-site residue. The Mg(2+) site is built by Asp252, Asn254, and Asp350. The active-site Proton donor/acceptor is the Asp252.

The protein belongs to the DNA repair enzymes AP/ExoA family. Mg(2+) serves as cofactor. Mn(2+) is required as a cofactor.

The protein resides in the nucleus. This chain is DNA-(apurinic or apyrimidinic site) endonuclease (apeA), found in Dictyostelium discoideum (Social amoeba).